We begin with the raw amino-acid sequence, 935 residues long: Bifunctional alpha-galactosidase/sucrose kinase AgaSK (935 aa).

Positions 1 to 720 (MAIIYNPNKK…EAYQFAFTEL (720 aa)) are alpha-galactosidase. Residues Glu-176, Glu-277, and Phe-280 each coordinate Mg(2+). Substrate-binding positions include 366 to 367 (DD), Arg-443, 476 to 480 (KWDMN), and 518 to 521 (CSGG). Residue Asp-526 is the Nucleophile of the active site. Asp-540 contacts substrate. Glu-606 (proton donor/acceptor) is an active-site residue. The interval 721 to 935 (KEAGRLYEKV…VGKDGSVYEQ (215 aa)) is sucrose kinase. ATP is bound by residues 748–752 (GGSGS) and Ala-824.

The protein in the N-terminal section; belongs to the glycosyl hydrolase 36 family. In the C-terminal section; belongs to the uridine kinase family. As to quaternary structure, homotetramer. Requires Mg(2+) as cofactor.

It carries out the reaction Hydrolysis of terminal, non-reducing alpha-D-galactose residues in alpha-D-galactosides, including galactose oligosaccharides, galactomannans and galactolipids.. In terms of biological role, bifunctional enzyme with alpha-galactosidase and sucrose kinase activities. Produces sucrose-6-phosphate directly from raffinose. Binds ATP. Phosphorylates sucrose specifically on the C6 position of glucose in the presence of ATP. Hydrolyzes melibiose, raffinose, stachyose and synthetic substrate p-nitrophenyl-alpha-D-galactopyranoside with high activity. Low activity against locust bean gum, guar gum and synthetic substrates xylose alpha-D-4-nitrophenol, glucose alpha-D-4-nitrophenol and o-nitrophenyl-alpha-D-galactopyranoside. This chain is Bifunctional alpha-galactosidase/sucrose kinase AgaSK, found in Mediterraneibacter gnavus (Ruminococcus gnavus).